Reading from the N-terminus, the 532-residue chain is Small ribosomal subunit protein uS2cz (532 aa).

The segment at 1-271 is N-terminal extension; it reads METLEKNFKK…SPISSKEKKA (271 aa). 3 consecutive TRAM domains span residues 38-97, 127-186, and 197-260; these read ALQA…SILN, DFKV…KPIL, and NQMI…KILK.

The protein belongs to the universal ribosomal protein uS2 family.

Its subcellular location is the plastid. The protein localises to the chloroplast. This Tetradesmus obliquus (Green alga) protein is Small ribosomal subunit protein uS2cz (rps2-1).